A 1086-amino-acid polypeptide reads, in one-letter code: NAD(P) transhydrogenase, mitochondrial (1086 aa).

The transit peptide at 1 to 43 directs the protein to the mitochondrion; that stretch reads MANLLKTVVTGCSCPLLSNLGSCKGLRVKKDFLRTFYTHQELW. Residues 44–474 lie on the Mitochondrial matrix side of the membrane; it reads CKAPVKPGIP…TITPFRKTMS (431 aa). Lys70 carries the post-translational modification N6-acetyllysine. Position 117 is an N6-succinyllysine (Lys117). Position 182–184 (182–184) interacts with NAD(+); the sequence is RVT. At Lys224 the chain carries N6-succinyllysine. Residues Val237, 257–259, and Gly287 each bind NAD(+); that span reads DTR. Lys294 carries the N6-succinyllysine modification. The NAD(+) site is built by Glu300 and Leu319. Lys331 bears the N6-succinyllysine mark. Lys397 is subject to N6-acetyllysine. The next 4 membrane-spanning stretches (helical) occupy residues 475-493, 501-521, 527-546, and 558-578; these read TASA…GIAA, MVTT…GVTP, LMSV…LALM, and GLAA…FLVT. The Mitochondrial matrix segment spans residues 579-595; sequence QRMLDMFKRPTDPPEYN. A run of 5 helical transmembrane segments spans residues 596–616, 622–642, 646–666, 672–691, and 702–722; these read YLYL…LYSG, IMYL…STQG, LGNA…LGVL, LLAQ…LTIA, and LVAA…IAEY. Residues 723–739 lie on the Cytoplasmic side of the membrane; sequence IIEYPHFATDAAANLTK. 5 helical membrane passes run 740–760, 778–797, 801–819, 833–853, and 857–879; these read IVAY…LIAY, HLLN…PFMV, FTTG…AVMG, VVIT…GFLL, and LLTI…MCVA. Over 880–1086 the chain is Mitochondrial matrix; the sequence is MNRSLANVIL…QAKVRESYQK (207 aa). Residues Tyr933, 965–970, 1007–1011, 1026–1027, 1042–1049, and 1068–1069 each bind NADP(+); these read VAGRMP, GANDT, GM, KRSLGVGY, and DA. The residue at position 1079 (Lys1079) is an N6-succinyllysine.

It in the N-terminal section; belongs to the AlaDH/PNT family. In the C-terminal section; belongs to the PNT beta subunit family. In terms of assembly, homodimer. Widely expressed with expression most readily detectable in adrenal, heart, kidney, thyroid and adipose tissues.

The protein resides in the mitochondrion inner membrane. It carries out the reaction NAD(+) + NADPH + H(+)(in) = NADH + NADP(+) + H(+)(out). Functionally, the transhydrogenation between NADH and NADP is coupled to respiration and ATP hydrolysis and functions as a proton pump across the membrane. May play a role in reactive oxygen species (ROS) detoxification in the adrenal gland. The protein is NAD(P) transhydrogenase, mitochondrial (NNT) of Homo sapiens (Human).